A 533-amino-acid polypeptide reads, in one-letter code: NAD(P)H-quinone oxidoreductase chain 4 1 (533 aa).

Transmembrane regions (helical) follow at residues 6–26 (FPWL…IPLI), 37–57 (YSLF…WQHF), 87–107 (LSMP…LASW), 113–133 (PKLF…VFTA), 137–157 (MLFF…ISIW), 169–189 (FILY…ALAF), 209–229 (WLEL…LSIF), 243–263 (NAPG…YALI), 277–297 (FAPV…LNAF), 311–331 (ISHM…GLNG), 332–352 (ALLQ…LAGV), 376–396 (FALF…SGFV), 417–437 (VTIL…LSML), and 461–481 (LFVA…PKLT).

It belongs to the complex I subunit 4 family.

It localises to the cellular thylakoid membrane. It carries out the reaction a plastoquinone + NADH + (n+1) H(+)(in) = a plastoquinol + NAD(+) + n H(+)(out). It catalyses the reaction a plastoquinone + NADPH + (n+1) H(+)(in) = a plastoquinol + NADP(+) + n H(+)(out). In terms of biological role, NDH-1 shuttles electrons from NAD(P)H, via FMN and iron-sulfur (Fe-S) centers, to quinones in the respiratory chain. The immediate electron acceptor for the enzyme in this species is believed to be plastoquinone. Couples the redox reaction to proton translocation (for every two electrons transferred, four hydrogen ions are translocated across the cytoplasmic membrane), and thus conserves the redox energy in a proton gradient. This is NAD(P)H-quinone oxidoreductase chain 4 1 from Synechococcus elongatus (strain ATCC 33912 / PCC 7942 / FACHB-805) (Anacystis nidulans R2).